A 412-amino-acid polypeptide reads, in one-letter code: Adenosine receptor A2a (412 aa).

Residues 1 to 7 (MPTVGSL) lie on the Extracellular side of the membrane. The chain crosses the membrane as a helical span at residues 8–32 (VYIMVELAIALLAILGNMLVCWAVW). The Cytoplasmic portion of the chain corresponds to 33-42 (LNSNLQNVTN). Residues 43–66 (YFVVSLAAADIAVGVLAIPFAITI) form a helical membrane-spanning segment. Topologically, residues 67–77 (STGFCAACHGC) are extracellular. 3 disulfide bridges follow: cysteine 71–cysteine 159, cysteine 74–cysteine 146, and cysteine 77–cysteine 166. The chain crosses the membrane as a helical span at residues 78 to 100 (LFIACFVLVLTQSSIFSLLAIAI). Residues 101 to 120 (DRYIAIRIPLRYNGLVTGTR) lie on the Cytoplasmic side of the membrane. A helical transmembrane segment spans residues 121–143 (AKGVIAVCWVLSFAIGLTPMLGW). The Extracellular portion of the chain corresponds to 144 to 173 (NNCHHWGEGENQSQGCGEGQVACLFEDVVP). Asparagine 154 carries an N-linked (GlcNAc...) asparagine glycan. Residue glutamate 169 coordinates adenosine. Residues 174-198 (MNYMVYYNFFACVLVPLLLMLGVYL) traverse the membrane as a helical segment. At 199–234 (RIFLAARRQLKQMETQPLPGERARSTLQKEVHAAKS) the chain is on the cytoplasmic side. A helical transmembrane segment spans residues 235–258 (LAIIVGLFALCWLPLHIINCFTFF). Asparagine 253 contacts adenosine. Residues cysteine 259 and cysteine 262 are joined by a disulfide bond. Residues 259–266 (CPECPHAP) are Extracellular-facing. A helical transmembrane segment spans residues 267–290 (LWLMYPAIILSHFNSVVNPFIYAY). Residues serine 277 and histidine 278 each coordinate adenosine. Topologically, residues 291 to 412 (RIREFRHTFH…PLAQDGAGVS (122 aa)) are cytoplasmic. Residues 368–412 (RASARESPGDTGLPDVELLSHELHGASPESPGLEGPLAQDGAGVS) form a disordered region.

Belongs to the G-protein coupled receptor 1 family. Interacts (via cytoplasmic C-terminal domain) with USP4; the interaction is direct. May interact with DRD4. Interacts with NECAB2. Interacts (via cytoplasmic C-terminal domain) with GAS2L2; interaction enhances receptor-mediated adenylyl cyclase activity. Post-translationally, ubiquitinated. Deubiquitinated by USP4; leading to stabilization and expression at the cell surface.

Its subcellular location is the cell membrane. Receptor for adenosine. The activity of this receptor is mediated by G proteins which activate adenylyl cyclase. This Equus caballus (Horse) protein is Adenosine receptor A2a (ADORA2A).